The following is a 175-amino-acid chain: Translation initiation factor IF-3 (175 aa).

Belongs to the IF-3 family. Monomer.

It is found in the cytoplasm. Its function is as follows. IF-3 binds to the 30S ribosomal subunit and shifts the equilibrium between 70S ribosomes and their 50S and 30S subunits in favor of the free subunits, thus enhancing the availability of 30S subunits on which protein synthesis initiation begins. The protein is Translation initiation factor IF-3 of Chlamydia trachomatis serovar D (strain ATCC VR-885 / DSM 19411 / UW-3/Cx).